A 321-amino-acid chain; its full sequence is uncharacterized protein (321 aa).

Catalysis depends on Y49, which acts as the Proton donor. Substrate is bound at residue H106.

It belongs to the aldo/keto reductase family.

This is an uncharacterized protein from Caenorhabditis elegans.